Reading from the N-terminus, the 184-residue chain is Probable N-acetyltransferase san (184 aa).

Residues 6–155 (IELGDVTPHN…DAHVLQKTLR (150 aa)) form the N-acetyltransferase domain. Position 31 (Y31) interacts with substrate. K47 carries the post-translational modification N6-acetyllysine; by autocatalysis. The active site involves Y73. A substrate-binding site is contributed by M75. An acetyl-CoA-binding site is contributed by 77-90 (LGCLSPYRRLGIGT). Residue H112 is part of the active site. A CoA-binding site is contributed by 117–126 (NNGAIEFYKK). Positions 138–141 (YYKR) are substrate. Over residues 157–174 (TAPNSNSTATSTTANSNS) the composition is skewed to low complexity. The tract at residues 157 to 176 (TAPNSNSTATSTTANSNSRS) is disordered.

It belongs to the acetyltransferase family. In terms of assembly, component of an acetyltransferase complex, at least composed of san, Ard1 and Nat1. Post-translationally, autoacetylated.

The protein resides in the cytoplasm. It carries out the reaction N-terminal L-methionyl-L-alanyl-[protein] + acetyl-CoA = N-terminal N(alpha)-acetyl-L-methionyl-L-alanyl-[protein] + CoA + H(+). The enzyme catalyses N-terminal L-methionyl-L-seryl-[protein] + acetyl-CoA = N-terminal N(alpha)-acetyl-L-methionyl-L-seryl-[protein] + CoA + H(+). The catalysed reaction is N-terminal L-methionyl-L-valyl-[protein] + acetyl-CoA = N-terminal N(alpha)-acetyl-L-methionyl-L-valyl-[protein] + CoA + H(+). It catalyses the reaction N-terminal L-methionyl-L-threonyl-[protein] + acetyl-CoA = N-terminal N(alpha)-acetyl-L-methionyl-L-threonyl-[protein] + CoA + H(+). It carries out the reaction N-terminal L-methionyl-L-lysyl-[protein] + acetyl-CoA = N-terminal N(alpha)-acetyl-L-methionyl-L-lysyl-[protein] + CoA + H(+). The enzyme catalyses N-terminal L-methionyl-L-leucyl-[protein] + acetyl-CoA = N-terminal N(alpha)-acetyl-L-methionyl-L-leucyl-[protein] + CoA + H(+). The catalysed reaction is N-terminal L-methionyl-L-phenylalanyl-[protein] + acetyl-CoA = N-terminal N(alpha)-acetyl-L-methionyl-L-phenylalanyl-[protein] + CoA + H(+). It catalyses the reaction N-terminal L-methionyl-L-tyrosyl-[protein] + acetyl-CoA = N-terminal N(alpha)-acetyl-L-methionyl-L-tyrosyl-[protein] + CoA + H(+). In terms of biological role, N-alpha-acetyltransferase that acetylates the N-terminus of proteins that retain their initiating methionine. Has a broad substrate specificity: able to acetylate the initiator methionine of most peptides. Also displays N-epsilon-acetyltransferase activity by mediating acetylation of the side chain of specific lysines on proteins. Autoacetylates. Required for the establishment of sister chromatid cohesion and couple the processes of cohesion and DNA replication to ensure that only sister chromatids become paired together. Required for the interaction between Scc1/vtd and SMC3, possibly by mediating N-terminal acetylation of Scc1/vtd. (Microbial infection) Required for optimal replication of E.chaffeensis in the immune tissues, hemocytes, and fat body. This Drosophila melanogaster (Fruit fly) protein is Probable N-acetyltransferase san (san).